The chain runs to 394 residues: DNA replication and repair protein RecF (394 aa).

ATP is bound at residue 30–37 (GRNGFGKT).

The protein belongs to the RecF family.

It localises to the cytoplasm. The RecF protein is involved in DNA metabolism; it is required for DNA replication and normal SOS inducibility. RecF binds preferentially to single-stranded, linear DNA. It also seems to bind ATP. The chain is DNA replication and repair protein RecF from Corynebacterium glutamicum (strain R).